Consider the following 110-residue polypeptide: Quaternary ammonium compound-resistance protein QacF (110 aa).

The next 4 membrane-spanning stretches (helical) occupy residues 1 to 21 (MKNWIFLAVSIFGEVIATSAL), 31 to 51 (VPSVVVVAGYGLAFYFLSLAL), 58 to 78 (IAYAVWAGLGIVLVAAIAWIF), and 85 to 105 (FWAFIGMGLIVSGVAVLNLLS).

It belongs to the drug/metabolite transporter (DMT) superfamily. Small multidrug resistance (SMR) (TC 2.A.7.1) family.

It is found in the cell membrane. Multidrug exporter. Is implicated for the resistance to bacteriocidal quaternary ammonium compounds. This Klebsiella aerogenes (Enterobacter aerogenes) protein is Quaternary ammonium compound-resistance protein QacF (qacF).